The following is a 577-amino-acid chain: Outer spore wall assembly protein SHE10 (577 aa).

An N-terminal signal peptide occupies residues 1–23 (MGKLIKLITTLTVLVSLLQYCCE). Coiled-coil stretches lie at residues 379 to 416 (NETR…ENVE) and 513 to 561 (ILRS…EEDV). A compositionally biased stretch (basic and acidic residues) spans 525 to 545 (RERKERERKEREKAAAEEFQR). The segment at 525–577 (RERKERERKEREKAAAEEFQRQQELLLQQEEEDEEDVSYTSTSTITTTTTMTL) is disordered. Over residues 562–577 (SYTSTSTITTTTTMTL) the composition is skewed to low complexity.

It belongs to the SHE10 family. As to quaternary structure, component of the mitochondria-localized RNase mitochondrial RNA-processing (RNase MRP) composed of one single RNA encoded by the NME1 gene and at least 31 proteins. Absent in the nucleus-localized RNase MRP (NuMRP).

It is found in the mitochondrion. Functionally, involved in spore wall assembly. May be a component of the mitochondrial RNase MRP (MtMRP), a ribonucleoprotein endoribonuclease involved in the cleaving RNA transcripts to generate primers for DNA replication in mitochondria. The polypeptide is Outer spore wall assembly protein SHE10 (Saccharomyces cerevisiae (strain RM11-1a) (Baker's yeast)).